The primary structure comprises 159 residues: NAD(P)H-quinone oxidoreductase subunit J, chloroplastic (159 aa).

The protein belongs to the complex I 30 kDa subunit family. NDH is composed of at least 16 different subunits, 5 of which are encoded in the nucleus.

Its subcellular location is the plastid. The protein resides in the chloroplast thylakoid membrane. It catalyses the reaction a plastoquinone + NADH + (n+1) H(+)(in) = a plastoquinol + NAD(+) + n H(+)(out). The enzyme catalyses a plastoquinone + NADPH + (n+1) H(+)(in) = a plastoquinol + NADP(+) + n H(+)(out). In terms of biological role, NDH shuttles electrons from NAD(P)H:plastoquinone, via FMN and iron-sulfur (Fe-S) centers, to quinones in the photosynthetic chain and possibly in a chloroplast respiratory chain. The immediate electron acceptor for the enzyme in this species is believed to be plastoquinone. Couples the redox reaction to proton translocation, and thus conserves the redox energy in a proton gradient. This chain is NAD(P)H-quinone oxidoreductase subunit J, chloroplastic, found in Oryza nivara (Indian wild rice).